Reading from the N-terminus, the 94-residue chain is Potassium channel protein kcv (94 aa).

Residues 14–34 form a helical membrane-spanning segment; sequence FMIHLFILAMFVMIYKFFPGG. An N-linked (GlcNAc...) asparagine; by host glycan is attached at Asn38. A helical membrane pass occupies residues 74–94; the sequence is TGAKLCTIAHIVTVFFIVLTL.

This sequence belongs to the two pore domain potassium channel (TC 1.A.1.12) family.

The protein localises to the membrane. In terms of biological role, potassium-selective channel essential in the virus replication cycle. May be involved in preventing multiple infections (Potential). The protein is Potassium channel protein kcv (A250R) of Paramecium bursaria Chlorella virus 1 (PBCV-1).